Reading from the N-terminus, the 231-residue chain is ATP phosphoribosyltransferase (231 aa).

The protein belongs to the ATP phosphoribosyltransferase family. Short subfamily. As to quaternary structure, heteromultimer composed of HisG and HisZ subunits.

It is found in the cytoplasm. The enzyme catalyses 1-(5-phospho-beta-D-ribosyl)-ATP + diphosphate = 5-phospho-alpha-D-ribose 1-diphosphate + ATP. The protein operates within amino-acid biosynthesis; L-histidine biosynthesis; L-histidine from 5-phospho-alpha-D-ribose 1-diphosphate: step 1/9. Functionally, catalyzes the condensation of ATP and 5-phosphoribose 1-diphosphate to form N'-(5'-phosphoribosyl)-ATP (PR-ATP). Has a crucial role in the pathway because the rate of histidine biosynthesis seems to be controlled primarily by regulation of HisG enzymatic activity. The protein is ATP phosphoribosyltransferase (hisG) of Sinorhizobium fredii (strain NBRC 101917 / NGR234).